The chain runs to 202 residues: Imidazoleglycerol-phosphate dehydratase (202 aa).

The protein belongs to the imidazoleglycerol-phosphate dehydratase family.

Its subcellular location is the cytoplasm. The catalysed reaction is D-erythro-1-(imidazol-4-yl)glycerol 3-phosphate = 3-(imidazol-4-yl)-2-oxopropyl phosphate + H2O. The protein operates within amino-acid biosynthesis; L-histidine biosynthesis; L-histidine from 5-phospho-alpha-D-ribose 1-diphosphate: step 6/9. In Rhizobium johnstonii (strain DSM 114642 / LMG 32736 / 3841) (Rhizobium leguminosarum bv. viciae), this protein is Imidazoleglycerol-phosphate dehydratase.